We begin with the raw amino-acid sequence, 251 residues long: tRNA pseudouridine synthase A (251 aa).

Residue aspartate 52 is the Nucleophile of the active site. Substrate is bound at residue tyrosine 113.

Belongs to the tRNA pseudouridine synthase TruA family. As to quaternary structure, homodimer.

It carries out the reaction uridine(38/39/40) in tRNA = pseudouridine(38/39/40) in tRNA. Its function is as follows. Formation of pseudouridine at positions 38, 39 and 40 in the anticodon stem and loop of transfer RNAs. In Brucella abortus (strain 2308), this protein is tRNA pseudouridine synthase A.